A 220-amino-acid polypeptide reads, in one-letter code: Ribose-5-phosphate isomerase A (220 aa).

Residues 28–31 (TGST), 81–84 (DGAD), and 94–97 (KGGG) contribute to the substrate site. Glu-103 (proton acceptor) is an active-site residue. Lys-121 contributes to the substrate binding site.

Belongs to the ribose 5-phosphate isomerase family. As to quaternary structure, homodimer.

It catalyses the reaction aldehydo-D-ribose 5-phosphate = D-ribulose 5-phosphate. Its pathway is carbohydrate degradation; pentose phosphate pathway; D-ribose 5-phosphate from D-ribulose 5-phosphate (non-oxidative stage): step 1/1. Catalyzes the reversible conversion of ribose-5-phosphate to ribulose 5-phosphate. The polypeptide is Ribose-5-phosphate isomerase A (Vesicomyosocius okutanii subsp. Calyptogena okutanii (strain HA)).